The following is a 253-amino-acid chain: Tryptophan synthase alpha chain (253 aa).

Catalysis depends on proton acceptor residues Glu48 and Asp59.

Belongs to the TrpA family. Tetramer of two alpha and two beta chains.

It catalyses the reaction (1S,2R)-1-C-(indol-3-yl)glycerol 3-phosphate + L-serine = D-glyceraldehyde 3-phosphate + L-tryptophan + H2O. It functions in the pathway amino-acid biosynthesis; L-tryptophan biosynthesis; L-tryptophan from chorismate: step 5/5. The alpha subunit is responsible for the aldol cleavage of indoleglycerol phosphate to indole and glyceraldehyde 3-phosphate. The polypeptide is Tryptophan synthase alpha chain (Caldicellulosiruptor saccharolyticus (strain ATCC 43494 / DSM 8903 / Tp8T 6331)).